A 450-amino-acid polypeptide reads, in one-letter code: 23S rRNA (uracil(1939)-C(5))-methyltransferase RlmD (450 aa).

The region spanning 12–70 (SKQLSAKLSLSVNQLDHLGAGIAQHQGKVVFIPGALPDETVTVQFTEQKKNYARAKLIK) is the TRAM domain. [4Fe-4S] cluster-binding residues include C83, C89, C92, and C171. The S-adenosyl-L-methionine site is built by Q283, F312, N317, E333, D360, and D380. C406 acts as the Nucleophile in catalysis.

This sequence belongs to the class I-like SAM-binding methyltransferase superfamily. RNA M5U methyltransferase family. RlmD subfamily.

The catalysed reaction is uridine(1939) in 23S rRNA + S-adenosyl-L-methionine = 5-methyluridine(1939) in 23S rRNA + S-adenosyl-L-homocysteine + H(+). Functionally, catalyzes the formation of 5-methyl-uridine at position 1939 (m5U1939) in 23S rRNA. This chain is 23S rRNA (uracil(1939)-C(5))-methyltransferase RlmD, found in Shewanella baltica (strain OS155 / ATCC BAA-1091).